Consider the following 150-residue polypeptide: MSLTLQSLKPQKGARRRKMRKGRGIAAGQGASCGFGMRGQKSRSGRPTRPGFEGGQMPLYRRVPKLKHFTLVNPKRFTVVNVGELAELKAGTVVTRDSLTEAGILTSPKHALKVLGDGELKVKLTVHAAAFTASAREKIEAAGGSCELID.

A disordered region spans residues 1–57 (MSLTLQSLKPQKGARRRKMRKGRGIAAGQGASCGFGMRGQKSRSGRPTRPGFEGGQM). The segment covering 12 to 23 (KGARRRKMRKGR) has biased composition (basic residues). Residues 25 to 37 (IAAGQGASCGFGM) show a composition bias toward gly residues.

The protein belongs to the universal ribosomal protein uL15 family. As to quaternary structure, part of the 50S ribosomal subunit.

Binds to the 23S rRNA. This Synechococcus sp. (strain RCC307) protein is Large ribosomal subunit protein uL15.